Here is a 576-residue protein sequence, read N- to C-terminus: Dihydroxy-acid dehydratase (576 aa).

Cys-56 contributes to the [2Fe-2S] cluster binding site. Asp-88 serves as a coordination point for Mg(2+). Cys-129 is a binding site for [2Fe-2S] cluster. Residues Asp-130 and Lys-131 each contribute to the Mg(2+) site. Lys-131 carries the N6-carboxylysine modification. Residue Cys-201 participates in [2Fe-2S] cluster binding. Glu-453 provides a ligand contact to Mg(2+). The active-site Proton acceptor is Ser-479.

It belongs to the IlvD/Edd family. As to quaternary structure, homodimer. It depends on [2Fe-2S] cluster as a cofactor. Mg(2+) is required as a cofactor.

It carries out the reaction (2R)-2,3-dihydroxy-3-methylbutanoate = 3-methyl-2-oxobutanoate + H2O. The catalysed reaction is (2R,3R)-2,3-dihydroxy-3-methylpentanoate = (S)-3-methyl-2-oxopentanoate + H2O. Its pathway is amino-acid biosynthesis; L-isoleucine biosynthesis; L-isoleucine from 2-oxobutanoate: step 3/4. It functions in the pathway amino-acid biosynthesis; L-valine biosynthesis; L-valine from pyruvate: step 3/4. In terms of biological role, functions in the biosynthesis of branched-chain amino acids. Catalyzes the dehydration of (2R,3R)-2,3-dihydroxy-3-methylpentanoate (2,3-dihydroxy-3-methylvalerate) into 2-oxo-3-methylpentanoate (2-oxo-3-methylvalerate) and of (2R)-2,3-dihydroxy-3-methylbutanoate (2,3-dihydroxyisovalerate) into 2-oxo-3-methylbutanoate (2-oxoisovalerate), the penultimate precursor to L-isoleucine and L-valine, respectively. This is Dihydroxy-acid dehydratase from Parvibaculum lavamentivorans (strain DS-1 / DSM 13023 / NCIMB 13966).